We begin with the raw amino-acid sequence, 364 residues long: tRNA N6-adenosine threonylcarbamoyltransferase (364 aa).

2 residues coordinate Fe cation: histidine 115 and histidine 119. Residues 137-141, aspartate 170, glycine 183, and asparagine 288 contribute to the substrate site; that span reads LVSGG. Aspartate 316 is a Fe cation binding site.

The protein belongs to the KAE1 / TsaD family. Requires Fe(2+) as cofactor.

It is found in the cytoplasm. The catalysed reaction is L-threonylcarbamoyladenylate + adenosine(37) in tRNA = N(6)-L-threonylcarbamoyladenosine(37) in tRNA + AMP + H(+). Its function is as follows. Required for the formation of a threonylcarbamoyl group on adenosine at position 37 (t(6)A37) in tRNAs that read codons beginning with adenine. Is involved in the transfer of the threonylcarbamoyl moiety of threonylcarbamoyl-AMP (TC-AMP) to the N6 group of A37, together with TsaE and TsaB. TsaD likely plays a direct catalytic role in this reaction. The chain is tRNA N6-adenosine threonylcarbamoyltransferase from Bartonella tribocorum (strain CIP 105476 / IBS 506).